The chain runs to 255 residues: GTP cyclohydrolase III (255 aa).

It belongs to the archaeal-type GTP cyclohydrolase family.

It carries out the reaction GTP + 3 H2O = 2-amino-5-formylamino-6-(5-phospho-D-ribosylamino)pyrimidin-4(3H)-one + 2 phosphate + 2 H(+). Functionally, catalyzes the formation of 2-amino-5-formylamino-6-ribofuranosylamino-4(3H)-pyrimidinone ribonucleotide monophosphate and inorganic phosphate from GTP. Also has an independent pyrophosphate phosphohydrolase activity. The polypeptide is GTP cyclohydrolase III (Methanosphaera stadtmanae (strain ATCC 43021 / DSM 3091 / JCM 11832 / MCB-3)).